The following is a 419-amino-acid chain: MNIFDELKARGLVFQTTDEAALSKALTEDMVSYYVGYDPTADSLHLGNLVLILTMKRLQMAGHKPYALVGGATGLIGDPSFKDSERSLQTKDTVTKWSGKIRSQLERFLDFENGENKAEMTNNYNWFENLTFIDFLRDVGKHFTVNYMISKDSVKSRMESGISYTEFAYQIMQGYDFYELNQLHNVTLQLGGSDQWGNMTAGTELLRRKANKQGHVITIPLITDSTGKKFGKSEGNAIWLDADKTSPYEMYQFWLNVDDADAVKMLKIFTFLSLEEIAEIEEQFEAARHERLAQKVLAREVVSLVHGKEAYEQAVKTSEILFGGGDLRQLDAKSILTGLKAAPQHQIAPDEDLTLIELLISAGIAPSKRQAREDITNGAIYINGERVQELDYVLTDSDKIENRLTVIRRGKKKNFVLTY.

Y34 is a binding site for L-tyrosine. The 'HIGH' region motif lies at 39–48; it reads PTADSLHLGN. L-tyrosine-binding residues include Y169 and Q173. The 'KMSKS' region motif lies at 229-233; the sequence is KFGKS. ATP is bound at residue K232. Residues 353–419 form the S4 RNA-binding domain; sequence LTLIELLISA…GKKKNFVLTY (67 aa).

The protein belongs to the class-I aminoacyl-tRNA synthetase family. TyrS type 1 subfamily. Homodimer.

Its subcellular location is the cytoplasm. The catalysed reaction is tRNA(Tyr) + L-tyrosine + ATP = L-tyrosyl-tRNA(Tyr) + AMP + diphosphate + H(+). Functionally, catalyzes the attachment of tyrosine to tRNA(Tyr) in a two-step reaction: tyrosine is first activated by ATP to form Tyr-AMP and then transferred to the acceptor end of tRNA(Tyr). The sequence is that of Tyrosine--tRNA ligase from Lactococcus lactis subsp. cremoris (strain SK11).